A 549-amino-acid chain; its full sequence is Lipase 5 (549 aa).

A signal peptide spans 1–15 (MKLALALSLIASVAA). Cysteines 75 and 112 form a disulfide. Catalysis depends on Ser-224, which acts as the Acyl-ester intermediate. Cys-283 and Cys-292 form a disulfide bridge. N-linked (GlcNAc...) asparagine glycosylation occurs at Asn-329. The active-site Charge relay system is Glu-356. Asn-366 carries an N-linked (GlcNAc...) asparagine glycan. The Charge relay system role is filled by His-464.

This sequence belongs to the type-B carboxylesterase/lipase family.

It carries out the reaction a triacylglycerol + H2O = a diacylglycerol + a fatty acid + H(+). The chain is Lipase 5 (LIP5) from Diutina rugosa (Yeast).